The following is a 494-amino-acid chain: MFKFATAVILCLVAASSTLAQHNPHWWGNRNTIVHLFEWKWSDIAAECENFLGPRGFAGVQVSPVNENIVSAGRPWWERYQPISYKLTTRSGNEKEFADMVRRCNEVGVRIYVDVLLNHMSGDFDGIAVGTAGSEAEPSKKSYPGVPYSALDFHPSCEITDWNDRFQVQQCELVGLKDLDQSSEWVRSKLIEFLDHLIELGVAGFRVDAAKHMAADDLSFIYSSLSDLNIEHGFPHNARPFIFQEVIDHGHETVSREEYNQLGAVTEFRFSEGIGNAFRGNNALKWLQSWGTGWGFLPSGQALTFVDNHDNQRDMGAVLNYKSPKQYKMATAFHLAYPYGISRVMSSFAFDDHDTAPPQDEQEKIISPEFDEEGACVNGWICEHRWRQIYAMVGFKNAVRDTELSNWWDNGDSQISFCRGNKGFLAVNNNLYDLSQELQTCLPAGVYCDVISGSLVDGSCTGKSVTVDDNGYGYAHIGSDDFDGVLALHVDAKV.

The N-terminal stretch at 1 to 20 is a signal peptide; the sequence is MFKFATAVILCLVAASSTLA. The residue at position 21 (Gln-21) is a Pyrrolidone carboxylic acid. Cys-48 and Cys-104 are oxidised to a cystine. Positions 118, 169, and 178 each coordinate Ca(2+). Residues Cys-157 and Cys-171 are joined by a disulfide bond. Position 206 (Arg-206) interacts with chloride. Catalysis depends on Asp-208, which acts as the Nucleophile. His-212 contributes to the Ca(2+) binding site. The active-site Proton donor is the Glu-245. 2 residues coordinate chloride: Asn-308 and Arg-343. 3 disulfide bridges follow: Cys-376/Cys-382, Cys-418/Cys-441, and Cys-448/Cys-460.

It belongs to the glycosyl hydrolase 13 family. In terms of assembly, monomer. Requires Ca(2+) as cofactor. Chloride is required as a cofactor.

The protein localises to the secreted. The enzyme catalyses Endohydrolysis of (1-&gt;4)-alpha-D-glucosidic linkages in polysaccharides containing three or more (1-&gt;4)-alpha-linked D-glucose units.. This is Alpha-amylase-related protein (Amyrel) from Drosophila bipectinata (Fruit fly).